A 977-amino-acid polypeptide reads, in one-letter code: Poly(ADP-ribose) glycohydrolase (977 aa).

Residues 1 to 69 form a disordered region; it reads MSAGPGCEPC…LGRAGQHRGS (69 aa). Residues 1–457 are A-domain; it reads MSAGPGCEPC…LSPDKKWLGT (457 aa). Residues 10 to 16 carry the Nuclear localization signal motif; the sequence is CTKRPRW. Residues 17–29 are compositionally biased toward low complexity; sequence DAAATSPPAASDA. S69 carries the phosphoserine modification. Residues 77–84 carry the PIP-box (PCNA interacting peptide) motif; it reads QKTITSWM. Phosphoserine is present on residues S138 and S198. Residues 184–407 form a disordered region; sequence SNANVDQSSP…CRNSKQHGRK (224 aa). Composition is skewed to basic and acidic residues over residues 192–207 and 223–234; these read SPKD…ESRD and TMEDEQGREARS. T200 is subject to Phosphothreonine. Phosphoserine occurs at positions 262, 265, 287, 292, 299, 303, and 317. The span at 280 to 291 shows a compositional bias: polar residues; the sequence is NRLNRQESSLGN. The segment covering 317 to 332 has biased composition (acidic residues); it reads SEADEETSPGFDEQED. Residues 333 to 343 show a composition bias toward polar residues; the sequence is SSSAQTANKPS. N6-acetyllysine is present on K341. Basic and acidic residues predominate over residues 346–356; that stretch reads QPREADTELRK. S449 carries the phosphoserine modification. Positions 611–796 are catalytic; that stretch reads QPIPLLKQKM…TEQYSEYTGY (186 aa). 727 to 728 contacts substrate; the sequence is IE. D738 is a catalytic residue. Positions 741 and 755 each coordinate substrate. Residues E756 and E757 contribute to the active site. Substrate contacts are provided by residues Y796 and 870–875; that span reads NWGCGA.

It belongs to the poly(ADP-ribose) glycohydrolase family. As to quaternary structure, interacts with PCNA. Interacts with NUDT5.

Its subcellular location is the nucleus. The enzyme catalyses [(1''-&gt;2')-ADP-alpha-D-ribose](n) + H2O = [(1''-&gt;2')-ADP-alpha-D-ribose](n-1) + ADP-D-ribose. Poly(ADP-ribose) glycohydrolase that degrades poly(ADP-ribose) by hydrolyzing the ribose-ribose bonds present in poly(ADP-ribose). PARG acts both as an endo- and exoglycosidase, releasing poly(ADP-ribose) of different length as well as ADP-ribose monomers. It is however unable to cleave the ester bond between the terminal ADP-ribose and ADP-ribosylated residues, leaving proteins that are mono-ADP-ribosylated. Poly(ADP-ribose) is synthesized after DNA damage is only present transiently and is rapidly degraded by PARG. Required to prevent detrimental accumulation of poly(ADP-ribose) upon prolonged replicative stress, while it is not required for recovery from transient replicative stress. Responsible for the prevalence of mono-ADP-ribosylated proteins in cells, thanks to its ability to degrade poly(ADP-ribose) without cleaving the terminal protein-ribose bond. Required for retinoid acid-dependent gene transactivation, probably by removing poly(ADP-ribose) from histone demethylase KDM4D, allowing chromatin derepression at RAR-dependent gene promoters. Involved in the synthesis of ATP in the nucleus, together with PARP1, NMNAT1 and NUDT5. Nuclear ATP generation is required for extensive chromatin remodeling events that are energy-consuming. The chain is Poly(ADP-ribose) glycohydrolase from Bos taurus (Bovine).